The chain runs to 150 residues: Deoxyuridine 5'-triphosphate nucleotidohydrolase (150 aa).

Substrate-binding positions include 65–67, Asn78, and 82–84; these read RSG and TID. A disordered region spans residues 130–150; sequence LSDTERGEGGFGHTGVASKAE.

Belongs to the dUTPase family. Mg(2+) is required as a cofactor.

The enzyme catalyses dUTP + H2O = dUMP + diphosphate + H(+). The protein operates within pyrimidine metabolism; dUMP biosynthesis; dUMP from dCTP (dUTP route): step 2/2. This enzyme is involved in nucleotide metabolism: it produces dUMP, the immediate precursor of thymidine nucleotides and it decreases the intracellular concentration of dUTP so that uracil cannot be incorporated into DNA. In Chlorobaculum parvum (strain DSM 263 / NCIMB 8327) (Chlorobium vibrioforme subsp. thiosulfatophilum), this protein is Deoxyuridine 5'-triphosphate nucleotidohydrolase.